A 317-amino-acid polypeptide reads, in one-letter code: Pseudouridine-5'-phosphate glycosidase (317 aa).

The active-site Proton donor is E27. Positions 89 and 109 each coordinate substrate. D141 provides a ligand contact to Mn(2+). Position 143–145 (S143–D145) interacts with substrate. K162 (nucleophile) is an active-site residue.

Belongs to the pseudouridine-5'-phosphate glycosidase family. As to quaternary structure, homotrimer. Requires Mn(2+) as cofactor.

It catalyses the reaction D-ribose 5-phosphate + uracil = psi-UMP + H2O. Functionally, catalyzes the reversible cleavage of pseudouridine 5'-phosphate (PsiMP) to ribose 5-phosphate and uracil. Functions biologically in the cleavage direction, as part of a pseudouridine degradation pathway. The chain is Pseudouridine-5'-phosphate glycosidase from Sorangium cellulosum (strain So ce56) (Polyangium cellulosum (strain So ce56)).